Consider the following 77-residue polypeptide: Large ribosomal subunit protein uL24c (77 aa).

It belongs to the universal ribosomal protein uL24 family. As to quaternary structure, part of the 50S ribosomal subunit.

The protein localises to the plastid. The protein resides in the chloroplast. One of two assembly initiator proteins, it binds directly to the 5'-end of the 23S rRNA, where it nucleates assembly of the 50S subunit. This is Large ribosomal subunit protein uL24c (rpl24) from Thalassiosira pseudonana (Marine diatom).